We begin with the raw amino-acid sequence, 62 residues long: Temporin-CDYb (62 aa).

The first 22 residues, 1 to 22 (MFTLKKSLLLLFFLGTINLSLC), serve as a signal peptide directing secretion. A propeptide spanning residues 23–45 (EEERDADEEERRDDPEERAVQVE) is cleaved from the precursor. Leu60 bears the Leucine amide mark.

It belongs to the frog skin active peptide (FSAP) family. Temporin subfamily. Expressed by the skin glands.

Its subcellular location is the secreted. In terms of biological role, antimicrobial peptide. Has low activity against the Gram-positive bacterium S.aureus (MIC&gt;100 uM) and the Gram-negative bacterium E.coli (MIC&gt;100 uM). Has weak hemolytic activity against human erythrocytes. The protein is Temporin-CDYb of Rana dybowskii (Dybovsky's frog).